A 98-amino-acid polypeptide reads, in one-letter code: ORF9b protein (98 aa).

Positions 9-98 (VPPALHLVDP…PDEFVVVTAK (90 aa)) constitute a 9b domain. The short motif at 46-54 (ILRLGSQLS) is the Nuclear export signal element.

The protein belongs to the coronavirus group 2 protein 9b family. Homodimer. Interacts with host XPO1; this interaction mediates protein ORF9b export out of the nucleus. Interacts with host MAVS. Interacts with protein ORF6.

It is found in the virion. The protein localises to the host cytoplasmic vesicle membrane. Its subcellular location is the host cytoplasm. It localises to the host endoplasmic reticulum. The protein resides in the host nucleus. It is found in the host mitochondrion. Functionally, plays a role in the inhibition of host innate immune response by targeting the mitochondrial-associated adapter MAVS. Mechanistically, usurps the E3 ligase ITCH to trigger the degradation of MAVS, TRAF3, and TRAF6. In addition, causes mitochondrial elongation by triggering ubiquitination and proteasomal degradation of dynamin-like protein 1/DNM1L. This Homo sapiens (Human) protein is ORF9b protein.